Consider the following 2896-residue polypeptide: 3'-5' exoribonuclease HELZ2 (2896 aa).

C3H1-type zinc fingers lie at residues 90–114 (VCHY…RSRE) and 217–246 (GQPP…HSAV). Residues 287–311 (LYCPACLVTCHSQEAFENHCASSEH) form a C2H2-type; atypical zinc finger. A C3H1-type 3 zinc finger spans residues 327 to 357 (SPPPGLSKFELCPKPDLCEYGDACTKAHSAQ). Residues 770 to 1126 (VALIAGWGPG…VVLSTVHTCQ (357 aa)) form the UvrD-like helicase ATP-binding domain. Position 791–798 (791–798 (GPFGTGKT)) interacts with ATP. The tract at residues 810–1306 (RRPETKVLIC…ESTEAEDAEA (497 aa)) is interaction with THRAP3. A DEAA box motif is present at residues 914–917 (DEAA). Phosphoserine is present on Ser1253. Short sequence motifs (LXXLL motif) lie at residues 1322 to 1326 (LRELL), 1365 to 1369 (LRKLL), and 1420 to 1424 (LVQLL). Residues 1581 to 1938 (REDCRAFLTF…VLQRQILLAL (358 aa)) form the RNB domain. Positions 2259-2263 (LEGLP) match the LXXLL motif 4 motif. An interaction with THRAP3 region spans residues 2382–2896 (PSRFLERQTY…RVCRRPTMPS (515 aa)). Residues 2400-2675 (LNPSQNVAVR…HMLDTQYRMH (276 aa)) form the UvrD-like helicase ATP-binding 2 domain. 2421–2428 (GPPGTGKT) is a binding site for ATP. The short motif at 2476–2480 (LAGLL) is the LXXLL motif 5 element.

Belongs to the DNA2/NAM7 helicase family. In terms of assembly, interacts with PPARA (via DNA-binding domain) and PPARG; the interaction stimulates the transcriptional activity of PPARA and PPARG. Interacts with THRAP3; the interaction is direct and HELZ2 and THRAP3 synergistically enhance the transcriptional activity of PPARG. It is probably part of the peroxisome proliferator activated receptor alpha interacting complex (PRIC). As to expression, expressed in various tissues including heart, pancreas, skeletal muscle, colon, spleen, liver, kidney, lung, peripheral blood and placenta.

It localises to the cytoplasm. It catalyses the reaction Exonucleolytic cleavage in the 3'- to 5'-direction to yield nucleoside 5'-phosphates.. The catalysed reaction is ATP + H2O = ADP + phosphate + H(+). In terms of biological role, can degrade highly structured RNAs through its concerted ATP-dependent RNA helicase and 3' to 5' exoribonuclease activities. Shows a strong preference for pyrimidine over purine residues for its nuclease activity. Acts as a transcriptional coactivator for a number of nuclear receptors including PPARA, PPARG, THRA, THRB and RXRA. This chain is 3'-5' exoribonuclease HELZ2, found in Homo sapiens (Human).